The chain runs to 232 residues: Large ribosomal subunit protein uL10c (232 aa).

The transit peptide at 1 to 52 (MESTLFLSKPLPTTIKTTTHSLSSVYPNPFKPNNLTFPRTTHKHPTTTTITA) directs the protein to the chloroplast.

The protein belongs to the universal ribosomal protein uL10 family. In terms of assembly, component of the chloroplast large ribosomal subunit (LSU). Mature 70S chloroplast ribosomes of higher plants consist of a small (30S) and a large (50S) subunit. The 30S small subunit contains 1 molecule of ribosomal RNA (16S rRNA) and 24 different proteins. The 50S large subunit contains 3 rRNA molecules (23S, 5S and 4.5S rRNA) and 33 different proteins.

It is found in the plastid. The protein localises to the chloroplast. Its function is as follows. Component of the chloroplast ribosome (chloro-ribosome), a dedicated translation machinery responsible for the synthesis of chloroplast genome-encoded proteins, including proteins of the transcription and translation machinery and components of the photosynthetic apparatus. The sequence is that of Large ribosomal subunit protein uL10c (RPL10) from Spinacia oleracea (Spinach).